Consider the following 452-residue polypeptide: GTPase Der (452 aa).

2 consecutive EngA-type G domains span residues 9 to 170 (KIIA…PEED) and 185 to 362 (LQIV…KTWN). Residues 15–22 (GRPNVGKS), 62–66 (DTPGF), 124–127 (NKCE), 191–198 (GRPNAGKS), 238–242 (DTAGL), and 303–306 (NKWD) contribute to the GTP site. Positions 363 to 448 (KKITTSKLNE…PIRFNYIKTK (86 aa)) constitute a KH-like domain.

It belongs to the TRAFAC class TrmE-Era-EngA-EngB-Septin-like GTPase superfamily. EngA (Der) GTPase family. As to quaternary structure, associates with the 50S ribosomal subunit.

In terms of biological role, GTPase that plays an essential role in the late steps of ribosome biogenesis. The protein is GTPase Der of Rickettsia bellii (strain OSU 85-389).